Reading from the N-terminus, the 406-residue chain is Corticosteroid-binding globulin (406 aa).

The signal sequence occupies residues Met1–Ala22. Residues Asn31 and Asn96 are each glycosylated (N-linked (GlcNAc...) asparagine). Gln255 serves as a coordination point for cortisol. An N-linked (GlcNAc...) asparagine glycan is attached at Asn261. Asp287 is a binding site for cortisol. N-linked (GlcNAc...) asparagine glycosylation is found at Asn331 and Asn360. Trp394 provides a ligand contact to cortisol.

This sequence belongs to the serpin family. As to expression, expressed by the liver; secreted in plasma.

The protein localises to the secreted. Major transport protein for glucocorticoids and progestins in the blood of almost all vertebrate species. The chain is Corticosteroid-binding globulin (SERPINA6) from Saimiri sciureus (Common squirrel monkey).